Here is a 488-residue protein sequence, read N- to C-terminus: 3-octaprenyl-4-hydroxybenzoate carboxy-lyase (488 aa).

Residue asparagine 172 coordinates Mn(2+). Residues 175-177 (IYR), 189-191 (RWL), and 194-195 (RG) contribute to the prenylated FMN site. Glutamate 238 contacts Mn(2+). Residue aspartate 287 is the Proton donor of the active site.

The protein belongs to the UbiD family. Homohexamer. The cofactor is prenylated FMN. Mn(2+) serves as cofactor.

It is found in the cell membrane. It carries out the reaction a 4-hydroxy-3-(all-trans-polyprenyl)benzoate + H(+) = a 2-(all-trans-polyprenyl)phenol + CO2. It participates in cofactor biosynthesis; ubiquinone biosynthesis. Its function is as follows. Catalyzes the decarboxylation of 3-octaprenyl-4-hydroxy benzoate to 2-octaprenylphenol, an intermediate step in ubiquinone biosynthesis. The sequence is that of 3-octaprenyl-4-hydroxybenzoate carboxy-lyase from Pseudomonas putida (strain GB-1).